A 369-amino-acid chain; its full sequence is Peptide chain release factor 2 (369 aa).

Gln251 bears the N5-methylglutamine mark.

This sequence belongs to the prokaryotic/mitochondrial release factor family. In terms of processing, methylated by PrmC. Methylation increases the termination efficiency of RF2.

It is found in the cytoplasm. Functionally, peptide chain release factor 2 directs the termination of translation in response to the peptide chain termination codons UGA and UAA. This is Peptide chain release factor 2 from Campylobacter fetus subsp. fetus (strain 82-40).